Here is a 774-residue protein sequence, read N- to C-terminus: DNA ligase (774 aa).

Residues 36–40 (DAVYD), 85–86 (SL), and E161 contribute to the NAD(+) site. K163 (N6-AMP-lysine intermediate) is an active-site residue. Positions 184, 221, 341, and 365 each coordinate NAD(+). Positions 459, 462, 477, and 482 each coordinate Zn(2+). The 82-residue stretch at 693–774 (VQSGLLRGKT…LLEALAVTGI (82 aa)) folds into the BRCT domain.

It belongs to the NAD-dependent DNA ligase family. LigA subfamily. Requires Mg(2+) as cofactor. It depends on Mn(2+) as a cofactor.

The catalysed reaction is NAD(+) + (deoxyribonucleotide)n-3'-hydroxyl + 5'-phospho-(deoxyribonucleotide)m = (deoxyribonucleotide)n+m + AMP + beta-nicotinamide D-nucleotide.. DNA ligase that catalyzes the formation of phosphodiester linkages between 5'-phosphoryl and 3'-hydroxyl groups in double-stranded DNA using NAD as a coenzyme and as the energy source for the reaction. It is essential for DNA replication and repair of damaged DNA. This chain is DNA ligase, found in Trichodesmium erythraeum (strain IMS101).